Reading from the N-terminus, the 152-residue chain is CASP-like protein 5C3 (152 aa).

Residues M1 to R17 are Cytoplasmic-facing. Residues L18–Y38 traverse the membrane as a helical segment. Over Q39–A42 the chain is Extracellular. A helical membrane pass occupies residues F43–V63. The Cytoplasmic segment spans residues D64–R78. The helical transmembrane segment at I79–S99 threads the bilayer. Topologically, residues S100–T128 are extracellular. N111 carries an N-linked (GlcNAc...) asparagine glycan. Residues L129–P149 traverse the membrane as a helical segment. Residues S150–I152 are Cytoplasmic-facing.

This sequence belongs to the Casparian strip membrane proteins (CASP) family. In terms of assembly, homodimer and heterodimers. In terms of tissue distribution, expressed in the floral organ abscission zone and flower buds.

It localises to the cell membrane. In Arabidopsis thaliana (Mouse-ear cress), this protein is CASP-like protein 5C3.